A 620-amino-acid polypeptide reads, in one-letter code: Arginine--tRNA ligase (620 aa).

Positions 147-157 (ANPTGPIHIGG) match the 'HIGH' region motif.

The protein belongs to the class-I aminoacyl-tRNA synthetase family. As to quaternary structure, monomer.

The protein localises to the cytoplasm. It catalyses the reaction tRNA(Arg) + L-arginine + ATP = L-arginyl-tRNA(Arg) + AMP + diphosphate. This chain is Arginine--tRNA ligase, found in Bifidobacterium longum (strain DJO10A).